Reading from the N-terminus, the 259-residue chain is MKEHKARKRFGQNFLQDTRIISDIVNAVRPQADDVVIEIGPGLAAITEPLAKKLNRLHVVEIDRDIVCRLKTLPFADKLVIHEGDVLQFDFNGIAGKKKIVGNLPYNISTPLLFKLAEVADDVVDMHFMLQKEVVDRMVAAPKSNDYGRLGVMLQYFFDMEMLIDVPPESFDPAPKVDSAVVRMIPVKHRIGKADDFEHFAKLVKLAFHQRRKTIRNNLKELAGDDDLQAVGINPQDRAEHIAPEKYVALSNYLAGKAV.

The S-adenosyl-L-methionine site is built by asparagine 13, leucine 15, glycine 40, glutamate 61, aspartate 85, and asparagine 103.

Belongs to the class I-like SAM-binding methyltransferase superfamily. rRNA adenine N(6)-methyltransferase family. RsmA subfamily.

The protein localises to the cytoplasm. The enzyme catalyses adenosine(1518)/adenosine(1519) in 16S rRNA + 4 S-adenosyl-L-methionine = N(6)-dimethyladenosine(1518)/N(6)-dimethyladenosine(1519) in 16S rRNA + 4 S-adenosyl-L-homocysteine + 4 H(+). In terms of biological role, specifically dimethylates two adjacent adenosines (A1518 and A1519) in the loop of a conserved hairpin near the 3'-end of 16S rRNA in the 30S particle. May play a critical role in biogenesis of 30S subunits. This is Ribosomal RNA small subunit methyltransferase A from Neisseria meningitidis serogroup A / serotype 4A (strain DSM 15465 / Z2491).